Reading from the N-terminus, the 212-residue chain is Nitric oxide synthase (212 aa).

Tyr-11 provides a ligand contact to heme b. A calmodulin-binding region spans residues 30-50 (KKRAIGFKKLAKAVKFSTKLM). Residues 60–212 (ATILYATETG…AVDTLLEELG (153 aa)) form the Flavodoxin-like domain. Positions 155–175 (SYSDSRKSSSDEPEHKDNFES) are disordered. A compositionally biased stretch (basic and acidic residues) spans 158–173 (DSRKSSSDEPEHKDNF). 186–212 (AFGLGSRAYPHFCAFARAVDTLLEELG) is a binding site for FMN.

This sequence belongs to the NOS family. Requires heme b as cofactor. FAD is required as a cofactor. It depends on FMN as a cofactor.

The catalysed reaction is 2 L-arginine + 3 NADPH + 4 O2 + H(+) = 2 L-citrulline + 2 nitric oxide + 3 NADP(+) + 4 H2O. Functionally, produces nitric oxide (NO) which is a messenger molecule with diverse functions throughout the body. The protein is Nitric oxide synthase of Squalus acanthias (Spiny dogfish).